We begin with the raw amino-acid sequence, 195 residues long: Probable GTP-binding protein EngB (195 aa).

Residues 22–194 enclose the EngB-type G domain; it reads LKGEVAFVGR…LDLISTLLKE (173 aa). GTP is bound by residues 30 to 37, 56 to 60, 74 to 77, 141 to 144, and 173 to 175; these read GRSNVGKS, GKTRS, DLPG, TKMD, and TSS. Serine 37 and threonine 58 together coordinate Mg(2+).

This sequence belongs to the TRAFAC class TrmE-Era-EngA-EngB-Septin-like GTPase superfamily. EngB GTPase family. It depends on Mg(2+) as a cofactor.

Necessary for normal cell division and for the maintenance of normal septation. The protein is Probable GTP-binding protein EngB of Thermotoga petrophila (strain ATCC BAA-488 / DSM 13995 / JCM 10881 / RKU-1).